Here is a 349-residue protein sequence, read N- to C-terminus: ATP phosphoribosyltransferase regulatory subunit (349 aa).

Residues 327-349 form a disordered region; sequence GRGRGVRPRRASARGGRARARPR. A compositionally biased stretch (basic residues) spans 330–349; it reads RGVRPRRASARGGRARARPR.

It belongs to the class-II aminoacyl-tRNA synthetase family. HisZ subfamily. In terms of assembly, heteromultimer composed of HisG and HisZ subunits.

Its subcellular location is the cytoplasm. It functions in the pathway amino-acid biosynthesis; L-histidine biosynthesis; L-histidine from 5-phospho-alpha-D-ribose 1-diphosphate: step 1/9. Required for the first step of histidine biosynthesis. May allow the feedback regulation of ATP phosphoribosyltransferase activity by histidine. The chain is ATP phosphoribosyltransferase regulatory subunit from Anaeromyxobacter dehalogenans (strain 2CP-1 / ATCC BAA-258).